We begin with the raw amino-acid sequence, 185 residues long: Threonylcarbamoyl-AMP synthase (185 aa).

The region spanning 4–185 (SFRVQQAARE…LATGEVVRPG (182 aa)) is the YrdC-like domain.

Belongs to the SUA5 family. TsaC subfamily.

It localises to the cytoplasm. The catalysed reaction is L-threonine + hydrogencarbonate + ATP = L-threonylcarbamoyladenylate + diphosphate + H2O. In terms of biological role, required for the formation of a threonylcarbamoyl group on adenosine at position 37 (t(6)A37) in tRNAs that read codons beginning with adenine. Catalyzes the conversion of L-threonine, HCO(3)(-)/CO(2) and ATP to give threonylcarbamoyl-AMP (TC-AMP) as the acyladenylate intermediate, with the release of diphosphate. The sequence is that of Threonylcarbamoyl-AMP synthase from Pseudomonas putida (strain ATCC 47054 / DSM 6125 / CFBP 8728 / NCIMB 11950 / KT2440).